The sequence spans 65 residues: Small ribosomal subunit protein eS27 (65 aa).

Zn(2+) contacts are provided by cysteine 20, cysteine 23, cysteine 39, and cysteine 42. The C4-type zinc-finger motif lies at 20–42 (CIDCGNEQIVFSHPATKVRCLVC).

This sequence belongs to the eukaryotic ribosomal protein eS27 family. Part of the 30S ribosomal subunit. Requires Zn(2+) as cofactor.

The polypeptide is Small ribosomal subunit protein eS27 (Thermococcus gammatolerans (strain DSM 15229 / JCM 11827 / EJ3)).